Consider the following 367-residue polypeptide: Trans-enoyl reductase opdC (367 aa).

Residues 47 to 50 (YDAK), 199 to 202 (SPHN), tyrosine 217, 264 to 265 (LD), and 353 to 354 (IT) each bind NADP(+).

This sequence belongs to the zinc-containing alcohol dehydrogenase family. In terms of assembly, monomer.

It functions in the pathway secondary metabolite biosynthesis. In terms of biological role, trans-enoyl reductase; part of the gene cluster that mediates the biosynthesis of oxopyrrolidines, polyketide-amino acid hybrid compounds with feature structures of tetramic acid. The polyketide chain is first assembled by the highly reducing PKS module of opdA using acetyl-CoA as the starter unit and five malonyl-CoA as the extender units. OpdC acts as a trans-acting enoyl reductase and reduces the terminal alkenyl to alkane. The 17R in oxopyrrolidine A and 15R, 17S in oxopyrrolidine B are generated by non-stereospecific catalysis of the ketoreductase (KR) domain and enoyl reductases. Then the polyketides with specific configurations are transferred to the NRPS module of opdA and linked to L-tyrosine to form an amide bond. Finally, the oxopyrrolidines are offloaded through a Dieckmann cyclization catalyzed by the terminal D domain to give a tetramic acid moiety. In Penicillium oxalicum (strain 114-2 / CGMCC 5302) (Penicillium decumbens), this protein is Trans-enoyl reductase opdC.